The chain runs to 130 residues: Large ribosomal subunit protein bL19 (130 aa).

The protein belongs to the bacterial ribosomal protein bL19 family.

Functionally, this protein is located at the 30S-50S ribosomal subunit interface and may play a role in the structure and function of the aminoacyl-tRNA binding site. The chain is Large ribosomal subunit protein bL19 from Burkholderia orbicola (strain MC0-3).